We begin with the raw amino-acid sequence, 276 residues long: tRNA dimethylallyltransferase (276 aa).

Positions 9 to 12 (DSLS) are interaction with substrate tRNA.

It belongs to the IPP transferase family. Monomer. Requires Mg(2+) as cofactor.

The enzyme catalyses adenosine(37) in tRNA + dimethylallyl diphosphate = N(6)-dimethylallyladenosine(37) in tRNA + diphosphate. Catalyzes the transfer of a dimethylallyl group onto the adenine at position 37 in tRNAs that read codons beginning with uridine, leading to the formation of N6-(dimethylallyl)adenosine (i(6)A). This Helicobacter pylori (strain HPAG1) protein is tRNA dimethylallyltransferase (miaA).